The following is a 71-amino-acid chain: 26S proteasome complex subunit rpn15 (71 aa).

Positions methionine 1–aspartate 38 are disordered. The segment covering asparagine 11–alanine 22 has biased composition (acidic residues). The UBS-II stretch occupies residues aspartate 16–asparagine 25. The tract at residues aspartate 38 to aspartate 49 is UBS-I.

It belongs to the DSS1/SEM1 family. Interacts with mlo3, rae1, nup98/nup189 and nup146. Interacts with rad24. Interacts (via UBSs) with ubiquitin (ubi3/ubi5).

The protein resides in the cytoplasm. It localises to the nucleus. In terms of biological role, versatile protein that might stabilize multiple protein complexes involved in diverse pathways. Subunit of the 26S proteasome which plays a role in ubiquitin-dependent proteolysis. Acts as a ubiquitin receptor of the 26S proteasome, by interacting with ubiquitin chains linked by 'Lys-63' and 'Lys-48'. Involved in nuclear export of specific sets of mRNAs. Links the mRNA adapter mlo3 to rae1 for targeting mRNA-protein complex to the proteins of the nucleoporin complex (NPC). Involved in recombinational repair of DNA. Plays a critical role in linking repair and checkpoint factors to damaged DNA sites by specifically recruiting rad24 and cdc25 to the DSBs. This chain is 26S proteasome complex subunit rpn15 (rpn15), found in Schizosaccharomyces pombe (strain 972 / ATCC 24843) (Fission yeast).